Here is a 301-residue protein sequence, read N- to C-terminus: UDP-N-acetylenolpyruvoylglucosamine reductase (301 aa).

Residues 30 to 194 (VGGEADYLVF…LSVKFALAPG (165 aa)) enclose the FAD-binding PCMH-type domain. Arg173 is an active-site residue. Ser223 (proton donor) is an active-site residue. Glu293 is an active-site residue.

Belongs to the MurB family. FAD is required as a cofactor.

The protein resides in the cytoplasm. It catalyses the reaction UDP-N-acetyl-alpha-D-muramate + NADP(+) = UDP-N-acetyl-3-O-(1-carboxyvinyl)-alpha-D-glucosamine + NADPH + H(+). Its pathway is cell wall biogenesis; peptidoglycan biosynthesis. Its function is as follows. Cell wall formation. The chain is UDP-N-acetylenolpyruvoylglucosamine reductase from Streptococcus pneumoniae (strain JJA).